The sequence spans 388 residues: LL-diaminopimelate aminotransferase (388 aa).

Positions 13, 38, 102, 126, and 176 each coordinate substrate. Residues 101–102, Tyr126, Asn176, Tyr207, and 235–237 contribute to the pyridoxal 5'-phosphate site; these read SK and SLS. Lys238 is modified (N6-(pyridoxal phosphate)lysine). Position 246 (Arg246) interacts with pyridoxal 5'-phosphate. A substrate-binding site is contributed by Arg364.

Belongs to the class-I pyridoxal-phosphate-dependent aminotransferase family. LL-diaminopimelate aminotransferase subfamily. As to quaternary structure, homodimer. Pyridoxal 5'-phosphate serves as cofactor.

The catalysed reaction is (2S,6S)-2,6-diaminopimelate + 2-oxoglutarate = (S)-2,3,4,5-tetrahydrodipicolinate + L-glutamate + H2O + H(+). It participates in amino-acid biosynthesis; L-lysine biosynthesis via DAP pathway; LL-2,6-diaminopimelate from (S)-tetrahydrodipicolinate (aminotransferase route): step 1/1. Involved in the synthesis of meso-diaminopimelate (m-DAP or DL-DAP), required for both lysine and peptidoglycan biosynthesis. Catalyzes the direct conversion of tetrahydrodipicolinate to LL-diaminopimelate. This chain is LL-diaminopimelate aminotransferase, found in Dehalococcoides mccartyi (strain ATCC BAA-2266 / KCTC 15142 / 195) (Dehalococcoides ethenogenes (strain 195)).